A 235-amino-acid polypeptide reads, in one-letter code: UPF0173 metal-dependent hydrolase mll0680 (235 aa).

Belongs to the UPF0173 family.

This is UPF0173 metal-dependent hydrolase mll0680 from Mesorhizobium japonicum (strain LMG 29417 / CECT 9101 / MAFF 303099) (Mesorhizobium loti (strain MAFF 303099)).